The chain runs to 333 residues: Phosphate acyltransferase (333 aa).

Belongs to the PlsX family. As to quaternary structure, homodimer. Probably interacts with PlsY.

It localises to the cytoplasm. It carries out the reaction a fatty acyl-[ACP] + phosphate = an acyl phosphate + holo-[ACP]. It functions in the pathway lipid metabolism; phospholipid metabolism. In terms of biological role, catalyzes the reversible formation of acyl-phosphate (acyl-PO(4)) from acyl-[acyl-carrier-protein] (acyl-ACP). This enzyme utilizes acyl-ACP as fatty acyl donor, but not acyl-CoA. This chain is Phosphate acyltransferase, found in Clostridium botulinum (strain Alaska E43 / Type E3).